A 175-amino-acid chain; its full sequence is uncharacterized protein (175 aa).

This is an uncharacterized protein from Acanthamoeba polyphaga mimivirus (APMV).